A 133-amino-acid chain; its full sequence is Small ribosomal subunit protein uS8 (133 aa).

The tract at residues 1-29 (MANHDPISDMLTRIRNASEKRHETTRIPA) is disordered. Positions 16–25 (NASEKRHETT) are enriched in basic and acidic residues.

It belongs to the universal ribosomal protein uS8 family. In terms of assembly, part of the 30S ribosomal subunit. Contacts proteins S5 and S12.

One of the primary rRNA binding proteins, it binds directly to 16S rRNA central domain where it helps coordinate assembly of the platform of the 30S subunit. The protein is Small ribosomal subunit protein uS8 of Prochlorococcus marinus (strain MIT 9211).